The sequence spans 1006 residues: Kinesin-like protein KIN-5C (1006 aa).

The Kinesin motor domain occupies Asn-9–Ile-355. Gly-95–Thr-102 lines the ATP pocket. The stretch at Ile-371–Arg-522 forms a coiled coil.

It belongs to the TRAFAC class myosin-kinesin ATPase superfamily. Kinesin family. KIN-5/BimC subfamily.

It is found in the cytoplasm. The protein resides in the cytoskeleton. It localises to the spindle. Functionally, responsible for microtubule translocation. May be important for the organization of phragmoplast-specific arrays of microtubules. Plays an essential role in stabilizing the mitotic spindle. Required during mitotic cytokinesis. This chain is Kinesin-like protein KIN-5C, found in Nicotiana tabacum (Common tobacco).